A 610-amino-acid chain; its full sequence is Phosphomethylpyrimidine synthase (610 aa).

Substrate-binding positions include Asn-216, Met-245, Tyr-274, His-310, Ser-330–Gly-332, Asp-371–Arg-374, and Glu-410. Zn(2+) is bound at residue His-414. Tyr-437 serves as a coordination point for substrate. Position 478 (His-478) interacts with Zn(2+). [4Fe-4S] cluster contacts are provided by Cys-558, Cys-561, and Cys-566.

Belongs to the ThiC family. As to quaternary structure, homodimer. Requires [4Fe-4S] cluster as cofactor.

The enzyme catalyses 5-amino-1-(5-phospho-beta-D-ribosyl)imidazole + S-adenosyl-L-methionine = 4-amino-2-methyl-5-(phosphooxymethyl)pyrimidine + CO + 5'-deoxyadenosine + formate + L-methionine + 3 H(+). The protein operates within cofactor biosynthesis; thiamine diphosphate biosynthesis. In terms of biological role, catalyzes the synthesis of the hydroxymethylpyrimidine phosphate (HMP-P) moiety of thiamine from aminoimidazole ribotide (AIR) in a radical S-adenosyl-L-methionine (SAM)-dependent reaction. In Rhizobium etli (strain ATCC 51251 / DSM 11541 / JCM 21823 / NBRC 15573 / CFN 42), this protein is Phosphomethylpyrimidine synthase.